Reading from the N-terminus, the 386-residue chain is Alcohol dehydrogenase-like 2 (386 aa).

Residues Cys-51, Thr-53, His-74, Cys-104, Cys-107, Cys-110, Cys-118, and Cys-183 each contribute to the Zn(2+) site. An alcohol contacts are provided by Thr-53 and His-74. Thr-53 is a binding site for NAD(+). Residues 208-213, Asp-232, Lys-237, 302-304, Phe-329, and Arg-379 each bind NAD(+); these read GLGAVG and LGM.

Belongs to the zinc-containing alcohol dehydrogenase family. Class-III subfamily. As to quaternary structure, homodimer. Requires Zn(2+) as cofactor.

It is found in the cytoplasm. It carries out the reaction a primary alcohol + NAD(+) = an aldehyde + NADH + H(+). The catalysed reaction is a secondary alcohol + NAD(+) = a ketone + NADH + H(+). The polypeptide is Alcohol dehydrogenase-like 2 (Arabidopsis thaliana (Mouse-ear cress)).